A 245-amino-acid polypeptide reads, in one-letter code: Uridylate kinase (245 aa).

Lys12–Gly15 contacts ATP. The segment at Gly20–Gly25 is involved in allosteric activation by GTP. Gly54 contacts UMP. Residues Gly55 and Arg59 each contribute to the ATP site. Residues Asp74 and Ile135–Thr142 each bind UMP. Positions 163, 169, and 172 each coordinate ATP.

It belongs to the UMP kinase family. In terms of assembly, homohexamer.

Its subcellular location is the cytoplasm. The enzyme catalyses UMP + ATP = UDP + ADP. Its pathway is pyrimidine metabolism; CTP biosynthesis via de novo pathway; UDP from UMP (UMPK route): step 1/1. Allosterically activated by GTP. Inhibited by UTP. Catalyzes the reversible phosphorylation of UMP to UDP. This Streptococcus thermophilus (strain ATCC BAA-250 / LMG 18311) protein is Uridylate kinase.